Reading from the N-terminus, the 57-residue chain is Large ribosomal subunit protein uL30 (57 aa).

This sequence belongs to the universal ribosomal protein uL30 family. Part of the 50S ribosomal subunit.

The polypeptide is Large ribosomal subunit protein uL30 (Clostridium acetobutylicum (strain ATCC 824 / DSM 792 / JCM 1419 / IAM 19013 / LMG 5710 / NBRC 13948 / NRRL B-527 / VKM B-1787 / 2291 / W)).